Here is an 834-residue protein sequence, read N- to C-terminus: Structure-specific endonuclease subunit SLX4 (834 aa).

Disordered regions lie at residues 80–105, 272–307, 332–372, 401–421, 603–649, and 720–740; these read RVPR…KTTT, TVPA…QKGK, QNVA…GRPV, GYPE…SNSA, ESKP…AKAL, and ATPN…SIEP. The span at 279-295 shows a compositional bias: polar residues; that stretch reads PTESSTTEDVQGSSSKQ. Over residues 296–305 the composition is skewed to basic residues; it reads QRVKAKKPQK. Composition is skewed to polar residues over residues 345-366 and 412-421; these read SNRP…TLKN and DTQNSPSNSA. Over residues 611–630 the composition is skewed to basic and acidic residues; it reads DDARKNGFRKENHSDVRVRP. Residues 729–740 show a composition bias toward low complexity; sequence QGSSSASFSIEP.

Belongs to the SLX4 family. Forms a heterodimer with SLX1. Post-translationally, phosphorylated in response to DNA damage.

The protein resides in the nucleus. Regulatory subunit of the SLX1-SLX4 structure-specific endonuclease that resolves DNA secondary structures generated during DNA repair and recombination. Has endonuclease activity towards branched DNA substrates, introducing single-strand cuts in duplex DNA close to junctions with ss-DNA. In Ajellomyces capsulatus (strain NAm1 / WU24) (Darling's disease fungus), this protein is Structure-specific endonuclease subunit SLX4.